The sequence spans 348 residues: Flagellar P-ring protein (348 aa).

An N-terminal signal peptide occupies residues 1 to 16 (MRVLTIFLLFMTSIFA).

It belongs to the FlgI family. In terms of assembly, the basal body constitutes a major portion of the flagellar organelle and consists of four rings (L,P,S, and M) mounted on a central rod.

The protein localises to the periplasm. The protein resides in the bacterial flagellum basal body. Its function is as follows. Assembles around the rod to form the L-ring and probably protects the motor/basal body from shearing forces during rotation. The chain is Flagellar P-ring protein from Campylobacter jejuni subsp. jejuni serotype O:6 (strain 81116 / NCTC 11828).